The primary structure comprises 716 residues: Fatty acid oxidation complex subunit alpha (716 aa).

The tract at residues 1 to 189 (MIYQSPTIQV…KVGAIDAVVA (189 aa)) is enoyl-CoA hydratase/isomerase. Substrate is bound at residue D296. Residues 311 to 716 (KDVNQAAVLG…AANNGSYYQA (406 aa)) form a 3-hydroxyacyl-CoA dehydrogenase region. Residues M324, D343, 400-402 (VVE), K407, and S429 contribute to the NAD(+) site. H450 (for 3-hydroxyacyl-CoA dehydrogenase activity) is an active-site residue. N453 is a binding site for NAD(+). Substrate contacts are provided by N500 and Y660.

It in the N-terminal section; belongs to the enoyl-CoA hydratase/isomerase family. This sequence in the C-terminal section; belongs to the 3-hydroxyacyl-CoA dehydrogenase family. In terms of assembly, heterotetramer of two alpha chains (FadB) and two beta chains (FadA).

The catalysed reaction is a (3S)-3-hydroxyacyl-CoA + NAD(+) = a 3-oxoacyl-CoA + NADH + H(+). It catalyses the reaction a (3S)-3-hydroxyacyl-CoA = a (2E)-enoyl-CoA + H2O. The enzyme catalyses a 4-saturated-(3S)-3-hydroxyacyl-CoA = a (3E)-enoyl-CoA + H2O. It carries out the reaction (3S)-3-hydroxybutanoyl-CoA = (3R)-3-hydroxybutanoyl-CoA. The catalysed reaction is a (3Z)-enoyl-CoA = a 4-saturated (2E)-enoyl-CoA. It catalyses the reaction a (3E)-enoyl-CoA = a 4-saturated (2E)-enoyl-CoA. It participates in lipid metabolism; fatty acid beta-oxidation. In terms of biological role, involved in the aerobic and anaerobic degradation of long-chain fatty acids via beta-oxidation cycle. Catalyzes the formation of 3-oxoacyl-CoA from enoyl-CoA via L-3-hydroxyacyl-CoA. It can also use D-3-hydroxyacyl-CoA and cis-3-enoyl-CoA as substrate. This is Fatty acid oxidation complex subunit alpha from Shewanella frigidimarina (strain NCIMB 400).